The following is a 391-amino-acid chain: S-adenosylmethionine synthase (391 aa).

Position 14 (His-14) interacts with ATP. Residue Asp-16 participates in Mg(2+) binding. K(+) is bound at residue Glu-42. L-methionine is bound by residues Glu-55 and Gln-98. Residues Gln-98 to Glu-108 are flexible loop. ATP contacts are provided by residues Asp-172–Lys-174, Arg-238–Phe-239, Asp-247, Arg-253–Lys-254, Ala-270, and Lys-274. Asp-247 provides a ligand contact to L-methionine. Lys-278 lines the L-methionine pocket.

It belongs to the AdoMet synthase family. As to quaternary structure, homotetramer; dimer of dimers. The cofactor is Mg(2+). Requires K(+) as cofactor.

The protein localises to the cytoplasm. It catalyses the reaction L-methionine + ATP + H2O = S-adenosyl-L-methionine + phosphate + diphosphate. It participates in amino-acid biosynthesis; S-adenosyl-L-methionine biosynthesis; S-adenosyl-L-methionine from L-methionine: step 1/1. In terms of biological role, catalyzes the formation of S-adenosylmethionine (AdoMet) from methionine and ATP. The overall synthetic reaction is composed of two sequential steps, AdoMet formation and the subsequent tripolyphosphate hydrolysis which occurs prior to release of AdoMet from the enzyme. This Clostridium acetobutylicum (strain ATCC 824 / DSM 792 / JCM 1419 / IAM 19013 / LMG 5710 / NBRC 13948 / NRRL B-527 / VKM B-1787 / 2291 / W) protein is S-adenosylmethionine synthase.